Consider the following 65-residue polypeptide: Large ribosomal subunit protein bL33c (65 aa).

The protein belongs to the bacterial ribosomal protein bL33 family.

It localises to the plastid. It is found in the chloroplast. This Gracilaria tenuistipitata var. liui (Red alga) protein is Large ribosomal subunit protein bL33c.